The chain runs to 435 residues: Serine protease snk (435 aa).

A signal peptide spans 1 to 27 (MIILWSLIVHLQLTCLHLILQTPNLEA). Residues 92-138 (FCRRSFDGRSGYCILAYQCLHVIREYRVHGTRIDICTHRNNVPVICC) enclose the Clip domain. 7 disulfides stabilise this stretch: C93–C137, C104–C127, C110–C138, C179–C303, C220–C236, C346–C366, and C377–C408. Positions 186-432 (IVGGTPTRHG…YLDWIEKIAF (247 aa)) constitute a Peptidase S1 domain. The Charge relay system role is filled by H235. A glycan (N-linked (GlcNAc...) asparagine) is linked at N255. D283 (charge relay system) is an active-site residue. S381 acts as the Charge relay system in catalysis.

Belongs to the peptidase S1 family. CLIP subfamily. As to quaternary structure, interacts (via N-terminal prodomain) with ea/easter (via Peptidase domain); leads to proteolytic activation of ea by snk. This interaction does not require sulfation of a vitelline membrane component by pip but proteolytic cleavage of ea by snk does. Proteolytically activated by gd. May also be cleaved by another protease.

It is found in the secreted. Functionally, component of the extracellular signaling pathway that establishes the dorsal-ventral pathway of the embryo. A protease cascade involving ndl, gd, snk and ea results in activation of the spz Toll receptor ligand; acts downstream of ndl and gd. Activation of ea requires both activation of the ndl-gd-snk protease cascade and sulfation of a vitelline membrane component by pip. Localized activation of the Toll receptor in the ventral region of the embryo defines cell identities along the dorsal-ventral continuum. The protein is Serine protease snk of Drosophila melanogaster (Fruit fly).